A 313-amino-acid chain; its full sequence is Olfactory receptor 1G1 (313 aa).

The Extracellular segment spans residues M1–K25. A glycan (N-linked (GlcNAc...) asparagine) is linked at N5. The helical transmembrane segment at A26 to I49 threads the bilayer. Residues I50–T57 are Cytoplasmic-facing. Residues P58 to P79 form a helical membrane-spanning segment. Residues K80–Q100 lie on the Extracellular side of the membrane. A disulfide bond links C97 and C189. Residues L101–Y120 traverse the membrane as a helical segment. The Cytoplasmic segment spans residues D121–L140. A helical membrane pass occupies residues C141 to L158. Residues H159–E196 lie on the Extracellular side of the membrane. A helical membrane pass occupies residues L197–T219. The Cytoplasmic segment spans residues N220–K236. A helical transmembrane segment spans residues A237–Y259. Topologically, residues F260 to T272 are extracellular. Residues V273–L292 traverse the membrane as a helical segment. Residues R293–P313 are Cytoplasmic-facing.

This sequence belongs to the G-protein coupled receptor 1 family.

It is found in the cell membrane. Odorant receptor. In Gorilla gorilla gorilla (Western lowland gorilla), this protein is Olfactory receptor 1G1 (OR1G1).